The chain runs to 209 residues: CASP-like protein 1B1 (209 aa).

Residues 1–10 (MDLERGDKKP) show a composition bias toward basic and acidic residues. The interval 1–39 (MDLERGDKKPPPPPPPAPRTAAATTTTTTTPACSGKKRP) is disordered. At 1–49 (MDLERGDKKPPPPPPPAPRTAAATTTTTTTPACSGKKRPPLRDSLVALQ) the chain is on the cytoplasmic side. Residues 19-32 (RTAAATTTTTTTPA) show a composition bias toward low complexity. The helical transmembrane segment at 50–70 (PVLLRAAAALAAAAAAAVMAL) threads the bilayer. At 71-100 (DAQSYTAVVAIVGTRPLTQTFTAKFSDTPA) the chain is on the extracellular side. The chain crosses the membrane as a helical span at residues 101-121 (FVYFVIANAIAAAYNLLVLLV). The Cytoplasmic portion of the chain corresponds to 122-134 (RRRRRTTAGLVVR). Residues 135-155 (MLDMVVMALLATGAAAAASMA) traverse the membrane as a helical segment. Over 156–180 (ELGRNGNARARWNPVCDRFGSFCRR) the chain is Extracellular. The helical transmembrane segment at 181-201 (GGAALAASFVGVALMLALNLL) threads the bilayer. At 202-209 (SAASGAGC) the chain is on the cytoplasmic side.

This sequence belongs to the Casparian strip membrane proteins (CASP) family. As to quaternary structure, homodimer and heterodimers.

Its subcellular location is the cell membrane. The protein is CASP-like protein 1B1 of Zea mays (Maize).